The sequence spans 386 residues: Galactokinase (386 aa).

32 to 35 (EHTD) provides a ligand contact to substrate. ATP is bound by residues Ser-66 and 123–129 (GASLSSS). Residues Ser-129 and Glu-161 each coordinate Mg(2+). Asp-173 serves as the catalytic Proton acceptor. Tyr-223 is a substrate binding site.

Belongs to the GHMP kinase family. GalK subfamily.

The protein resides in the cytoplasm. The catalysed reaction is alpha-D-galactose + ATP = alpha-D-galactose 1-phosphate + ADP + H(+). It functions in the pathway carbohydrate metabolism; galactose metabolism. Functionally, catalyzes the transfer of the gamma-phosphate of ATP to D-galactose to form alpha-D-galactose-1-phosphate (Gal-1-P). The polypeptide is Galactokinase (Staphylococcus saprophyticus subsp. saprophyticus (strain ATCC 15305 / DSM 20229 / NCIMB 8711 / NCTC 7292 / S-41)).